The primary structure comprises 336 residues: D-alanine--D-alanine ligase (336 aa).

The region spanning lysine 124 to lysine 330 is the ATP-grasp domain. Position 154–209 (alanine 154–glutamate 209) interacts with ATP. Mg(2+) contacts are provided by aspartate 284, glutamate 297, and asparagine 299.

It belongs to the D-alanine--D-alanine ligase family. Mg(2+) serves as cofactor. It depends on Mn(2+) as a cofactor.

The protein resides in the cytoplasm. It catalyses the reaction 2 D-alanine + ATP = D-alanyl-D-alanine + ADP + phosphate + H(+). Its pathway is cell wall biogenesis; peptidoglycan biosynthesis. Functionally, cell wall formation. The protein is D-alanine--D-alanine ligase of Shewanella sp. (strain MR-7).